Reading from the N-terminus, the 141-residue chain is Large ribosomal subunit protein uL11 (141 aa).

Belongs to the universal ribosomal protein uL11 family. As to quaternary structure, part of the ribosomal stalk of the 50S ribosomal subunit. Interacts with L10 and the large rRNA to form the base of the stalk. L10 forms an elongated spine to which L12 dimers bind in a sequential fashion forming a multimeric L10(L12)X complex. In terms of processing, one or more lysine residues are methylated.

Forms part of the ribosomal stalk which helps the ribosome interact with GTP-bound translation factors. The sequence is that of Large ribosomal subunit protein uL11 from Clostridium botulinum (strain Alaska E43 / Type E3).